We begin with the raw amino-acid sequence, 264 residues long: Acetyl-coenzyme A carboxylase carboxyl transferase subunit beta (264 aa).

One can recognise a CoA carboxyltransferase N-terminal domain in the interval 4 to 264; that stretch reads LWVKCKQCQQ…CGNSLEGVES (261 aa). 4 residues coordinate Zn(2+): cysteine 8, cysteine 11, cysteine 27, and cysteine 29. Residues 8–29 form a C4-type zinc finger; sequence CKQCQQILLTKELEKNLKVCRC.

The protein belongs to the AccD/PCCB family. Acetyl-CoA carboxylase is a heterohexamer composed of biotin carboxyl carrier protein (AccB), biotin carboxylase (AccC) and two subunits each of ACCase subunit alpha (AccA) and ACCase subunit beta (AccD). Zn(2+) is required as a cofactor.

Its subcellular location is the cytoplasm. The enzyme catalyses N(6)-carboxybiotinyl-L-lysyl-[protein] + acetyl-CoA = N(6)-biotinyl-L-lysyl-[protein] + malonyl-CoA. It functions in the pathway lipid metabolism; malonyl-CoA biosynthesis; malonyl-CoA from acetyl-CoA: step 1/1. Functionally, component of the acetyl coenzyme A carboxylase (ACC) complex. Biotin carboxylase (BC) catalyzes the carboxylation of biotin on its carrier protein (BCCP) and then the CO(2) group is transferred by the transcarboxylase to acetyl-CoA to form malonyl-CoA. In Heliobacterium modesticaldum (strain ATCC 51547 / Ice1), this protein is Acetyl-coenzyme A carboxylase carboxyl transferase subunit beta.